Here is an 81-residue protein sequence, read N- to C-terminus: Exodeoxyribonuclease 7 small subunit (81 aa).

Residues 60 to 70 (LVDKDGNEKAL) show a composition bias toward basic and acidic residues. Residues 60–81 (LVDKDGNEKALDPQNASAPEEE) are disordered.

It belongs to the XseB family. In terms of assembly, heterooligomer composed of large and small subunits.

The protein localises to the cytoplasm. The enzyme catalyses Exonucleolytic cleavage in either 5'- to 3'- or 3'- to 5'-direction to yield nucleoside 5'-phosphates.. Functionally, bidirectionally degrades single-stranded DNA into large acid-insoluble oligonucleotides, which are then degraded further into small acid-soluble oligonucleotides. The polypeptide is Exodeoxyribonuclease 7 small subunit (Lactobacillus johnsonii (strain CNCM I-12250 / La1 / NCC 533)).